A 169-amino-acid polypeptide reads, in one-letter code: MAVREVRLFGDPVLVSRADEVVDFDESLSTLIDDMFDTMEDAGGVGLAANQVGVLRRVFVFDTSHQEGGLRGHVINPVWEPLTEDTQTGKEGCLSIPDVSAETTRYETVRLSGQDRDGNPVGFVANGLLARCIQHETDHLDGVLFLKRLDPAERKAAMGVIRASAWFNK.

Fe cation-binding residues include C93 and H135. E136 is a catalytic residue. H139 contributes to the Fe cation binding site.

The protein belongs to the polypeptide deformylase family. It depends on Fe(2+) as a cofactor.

It carries out the reaction N-terminal N-formyl-L-methionyl-[peptide] + H2O = N-terminal L-methionyl-[peptide] + formate. Functionally, removes the formyl group from the N-terminal Met of newly synthesized proteins. Requires at least a dipeptide for an efficient rate of reaction. N-terminal L-methionine is a prerequisite for activity but the enzyme has broad specificity at other positions. The sequence is that of Peptide deformylase 1 from Corynebacterium glutamicum (strain ATCC 13032 / DSM 20300 / JCM 1318 / BCRC 11384 / CCUG 27702 / LMG 3730 / NBRC 12168 / NCIMB 10025 / NRRL B-2784 / 534).